A 43-amino-acid polypeptide reads, in one-letter code: Protein PsbN (43 aa).

The helical transmembrane segment at 5–27 threads the bilayer; that stretch reads TLIAISISGLLVSFTGYALYTAF.

This sequence belongs to the PsbN family.

Its subcellular location is the plastid. It is found in the chloroplast thylakoid membrane. In terms of biological role, may play a role in photosystem I and II biogenesis. This Phaseolus vulgaris (Kidney bean) protein is Protein PsbN.